The sequence spans 293 residues: ATP synthase subunit gamma, mitochondrial (293 aa).

Residues 1–21 constitute a mitochondrion transit peptide; sequence MFALRTAARPAARSVGATRNY.

As to quaternary structure, F-type ATP synthases have 2 components, the catalytic core F(1) and the membrane-embedded component F(0), linked together by a central stalk and a peripheral stalk. The central stalk, also called rotor shaft, is often seen as part of F(1). The peripheral stalk is seen as part of F(0). F(0) contains the membrane channel next to the rotor. F-type ATP synthases form dimers but each monomer functions independently in ATP generation. The dimer consists of 17 different polypeptides: ATP1 (subunit alpha, 3 molecules per monomer, part of F(1)), ATP2 (subunit beta, 3 copies per monomer, part of F(1)), ATP3 (subunit gamma, part of the central stalk), ATP4 (subunit b, part of the peripheral stalk), ATP5/OSCP (subunit 5/OSCP, part of the peripheral stalk), ATP6 (subunit a, part of the peripheral stalk), ATP7 (subunit d, part of the peripheral stalk), ATP8 (subunit 8, part of the peripheral stalk), OLI1 (subunit c, part of the rotor, 10 molecules per monomer), ATP14 (subunit h, part of the peripheral stalk), ATP15 (subunit epsilon, part of the central stalk), ATP16 (subunit delta, part of the central stalk), ATP17 (subunit f, part of the peripheral stalk), ATP18 (subunit i/j, part of the peripheral stalk), ATP19 (subunit k, dimer-specific, at interface between monomers), ATP20 (subunit g, at interface between monomers), TIM11 (subunit e, at interface between monomers).

The protein localises to the mitochondrion inner membrane. In terms of biological role, mitochondrial membrane ATP synthase (F(1)F(0) ATP synthase or Complex V) produces ATP from ADP in the presence of a proton gradient across the membrane which is generated by electron transport complexes of the respiratory chain. F-type ATP synthases consist of two structural domains, F(1) - containing the extramembraneous catalytic core, and F(0) - containing the membrane proton channel, linked together by a central stalk and a peripheral stalk. During catalysis, ATP synthesis in the catalytic domain of F(1) is coupled via a rotary mechanism of the central stalk subunits to proton translocation. Part of the complex F(1) domain and the central stalk which is part of the complex rotary element. The gamma/ATP3 subunit protrudes into the catalytic domain formed of alpha/ATP1(3)beta/ATP2(3). Rotation of the central stalk against the surrounding alpha/ATP1(3)beta/ATP2(3) subunits leads to hydrolysis of ATP in three separate catalytic sites on the beta/ATP2 subunits. The polypeptide is ATP synthase subunit gamma, mitochondrial (Yarrowia lipolytica (strain CLIB 122 / E 150) (Yeast)).